The following is a 332-amino-acid chain: GTP 3',8-cyclase (332 aa).

Positions 9 to 234 (TFGRRISYLR…DSDHRTGGPS (226 aa)) constitute a Radical SAM core domain. Residue arginine 18 coordinates GTP. Positions 25 and 29 each coordinate [4Fe-4S] cluster. Residue tyrosine 31 participates in S-adenosyl-L-methionine binding. A [4Fe-4S] cluster-binding site is contributed by cysteine 32. A GTP-binding site is contributed by arginine 67. An S-adenosyl-L-methionine-binding site is contributed by glycine 71. Threonine 100 is a binding site for GTP. Serine 124 is a binding site for S-adenosyl-L-methionine. Lysine 160 contributes to the GTP binding site. Methionine 194 serves as a coordination point for S-adenosyl-L-methionine. Positions 257 and 260 each coordinate [4Fe-4S] cluster. A GTP-binding site is contributed by 262-264 (RVR). Cysteine 274 serves as a coordination point for [4Fe-4S] cluster.

Belongs to the radical SAM superfamily. MoaA family. In terms of assembly, monomer and homodimer. Requires [4Fe-4S] cluster as cofactor.

It catalyses the reaction GTP + AH2 + S-adenosyl-L-methionine = (8S)-3',8-cyclo-7,8-dihydroguanosine 5'-triphosphate + 5'-deoxyadenosine + L-methionine + A + H(+). The protein operates within cofactor biosynthesis; molybdopterin biosynthesis. Its function is as follows. Catalyzes the cyclization of GTP to (8S)-3',8-cyclo-7,8-dihydroguanosine 5'-triphosphate. The chain is GTP 3',8-cyclase from Erythrobacter litoralis (strain HTCC2594).